A 436-amino-acid chain; its full sequence is MKILVVGTGAREHAICSALADEATIYSVMGNRNPGISRLAGNSLLLLKLTPKVVRFASEKGVDMAFIGPEAHLEAGLVDALEEAGIPSVGPTRDAARIETDKSFMRKLFEDYRIPGSITYRVFSDPEELREFMEDFDSEAVVKPVGLTGGKGVKIVGEHLRDNMEALKYATEVIEKRIGGHPSVVIEERVVGEEFTVQAFSDGEHIVPMPAVQDHPHAYEGDQGPITGGMGSYSDSDGLLPFLTQKDYEDAVEIMQRTVDAIRKETGPYRGILYGQFMLSADGPKLIEYNARFGDPEAMNVLPLLESSMLEICEGIVDGNLKSASFMNLATVCKYLVPEGYPESGVAGAEIKVDEKKIEDMGVITYYAAVNQEDDHIYTSSSRALALVAPADDIYSAEELCEEATAHVKGRLYHRRDIGTRELVEKRIKHMEDLRS.

Residues 106–318 (RKLFEDYRIP…MLEICEGIVD (213 aa)) form the ATP-grasp domain. ATP is bound at residue 133–196 (MEDFDSEAVV…EERVVGEEFT (64 aa)). Mg(2+) is bound by residues Gln276, Glu288, and Asn290. Mn(2+) is bound by residues Gln276, Glu288, and Asn290.

This sequence belongs to the GARS family. It depends on Mg(2+) as a cofactor. Mn(2+) is required as a cofactor.

It catalyses the reaction 5-phospho-beta-D-ribosylamine + glycine + ATP = N(1)-(5-phospho-beta-D-ribosyl)glycinamide + ADP + phosphate + H(+). The protein operates within purine metabolism; IMP biosynthesis via de novo pathway; N(1)-(5-phospho-D-ribosyl)glycinamide from 5-phospho-alpha-D-ribose 1-diphosphate: step 2/2. The sequence is that of Phosphoribosylamine--glycine ligase from Methanothermobacter thermautotrophicus (strain ATCC 29096 / DSM 1053 / JCM 10044 / NBRC 100330 / Delta H) (Methanobacterium thermoautotrophicum).